Here is a 609-residue protein sequence, read N- to C-terminus: MFS siderochrome iron transporter 1 (609 aa).

Composition is skewed to basic and acidic residues over residues 1 to 17 (MSALTKIREGLAREDNT) and 25 to 34 (PHEKEIHETP). Residues 1 to 69 (MSALTKIREG…NDSDVPSEDV (69 aa)) are disordered. The next 14 helical transmembrane spans lie at 81-101 (LTWGKGSLAALLCLIWTLFLI), 125-145 (LMTTIPIVSDAMTAACYIPMA), 154-174 (AEGFLLMSGFATLGLILMAVS), 182-202 (AAQVFYSVGWGGMIYAVGVLA), 220-240 (SPYMITAFAGSKAAAAFVIDV), 245-265 (WGFGWIALVLPCVTIPLFLVL), 300-320 (VIGIFLFGGGLVVFLLPFNLA), 329-349 (TGYIIAMIIVGFCTLIFFGVW), 368-390 (SVVAACMIDLTYQVSYYTWNYFF), 407-427 (YVNSTFQVVSGVLLFIVGFLI), 432-452 (FYKWTFYFAVPIYIFALGLMI), 469-489 (IFISIGGAVFILVMQLAVLAA), 496-516 (AAALATLYVAGGVGGAVGGAI), and 573-593 (IRMLAAGVGIASLFFIWVPML).

Belongs to the major facilitator superfamily.

The protein localises to the cell membrane. Its function is as follows. Major facilitator transporter involved in extracellular siderophore uptake. Gibberella zeae produces extracellular coprogen-type siderophores as well as the intracellular siderophore ferricrocin. The role of extracellular siderophores is to supply iron to the fungus during plant infection, and the intracellular ferricrocin is required for intracellular iron distribution and storage with a crucial role in ascus and ascospore development. The sequence is that of MFS siderochrome iron transporter 1 from Gibberella zeae (strain ATCC MYA-4620 / CBS 123657 / FGSC 9075 / NRRL 31084 / PH-1) (Wheat head blight fungus).